Consider the following 431-residue polypeptide: Enolase (431 aa).

A (2R)-2-phosphoglycerate-binding site is contributed by Gln-167. Glu-209 serves as the catalytic Proton donor. Mg(2+)-binding residues include Asp-246, Glu-289, and Asp-316. (2R)-2-phosphoglycerate-binding residues include Lys-341, Arg-370, Ser-371, and Lys-392. The active-site Proton acceptor is the Lys-341.

This sequence belongs to the enolase family. In terms of assembly, component of the RNA degradosome, a multiprotein complex involved in RNA processing and mRNA degradation. Requires Mg(2+) as cofactor.

It is found in the cytoplasm. It localises to the secreted. Its subcellular location is the cell surface. It catalyses the reaction (2R)-2-phosphoglycerate = phosphoenolpyruvate + H2O. It participates in carbohydrate degradation; glycolysis; pyruvate from D-glyceraldehyde 3-phosphate: step 4/5. Catalyzes the reversible conversion of 2-phosphoglycerate (2-PG) into phosphoenolpyruvate (PEP). It is essential for the degradation of carbohydrates via glycolysis. The sequence is that of Enolase from Shewanella halifaxensis (strain HAW-EB4).